Reading from the N-terminus, the 202-residue chain is Large ribosomal subunit protein bL25 (202 aa).

It belongs to the bacterial ribosomal protein bL25 family. CTC subfamily. As to quaternary structure, part of the 50S ribosomal subunit; part of the 5S rRNA/L5/L18/L25 subcomplex. Contacts the 5S rRNA. Binds to the 5S rRNA independently of L5 and L18.

In terms of biological role, this is one of the proteins that binds to the 5S RNA in the ribosome where it forms part of the central protuberance. This chain is Large ribosomal subunit protein bL25, found in Corynebacterium efficiens (strain DSM 44549 / YS-314 / AJ 12310 / JCM 11189 / NBRC 100395).